Here is a 258-residue protein sequence, read N- to C-terminus: Acyl-[acyl-carrier-protein]--UDP-N-acetylglucosamine O-acyltransferase (258 aa).

Belongs to the transferase hexapeptide repeat family. LpxA subfamily. As to quaternary structure, homotrimer.

The protein resides in the cytoplasm. The enzyme catalyses a (3R)-hydroxyacyl-[ACP] + UDP-N-acetyl-alpha-D-glucosamine = a UDP-3-O-[(3R)-3-hydroxyacyl]-N-acetyl-alpha-D-glucosamine + holo-[ACP]. The protein operates within glycolipid biosynthesis; lipid IV(A) biosynthesis; lipid IV(A) from (3R)-3-hydroxytetradecanoyl-[acyl-carrier-protein] and UDP-N-acetyl-alpha-D-glucosamine: step 1/6. Functionally, involved in the biosynthesis of lipid A, a phosphorylated glycolipid that anchors the lipopolysaccharide to the outer membrane of the cell. This Alkalilimnicola ehrlichii (strain ATCC BAA-1101 / DSM 17681 / MLHE-1) protein is Acyl-[acyl-carrier-protein]--UDP-N-acetylglucosamine O-acyltransferase.